A 135-amino-acid chain; its full sequence is 2-iminobutanoate/2-iminopropanoate deaminase (135 aa).

The residue at position 2 (Ser2) is an N-acetylserine. 4 positions are modified to N6-succinyllysine: Lys13, Lys60, Lys67, and Lys134.

This sequence belongs to the RutC family. As to quaternary structure, homotrimer. Interacts with YTHDF2. In terms of tissue distribution, expressed predominantly in liver and kidney. Lower levels in lung and brain.

It localises to the cytoplasm. The protein resides in the nucleus. Its subcellular location is the peroxisome. The protein localises to the mitochondrion. It catalyses the reaction 2-iminobutanoate + H2O = 2-oxobutanoate + NH4(+). The catalysed reaction is 2-iminopropanoate + H2O = pyruvate + NH4(+). In terms of biological role, catalyzes the hydrolytic deamination of enamine/imine intermediates that form during the course of normal metabolism. May facilitate the release of ammonia from these potentially toxic reactive metabolites, reducing their impact on cellular components. It may act on enamine/imine intermediates formed by several types of pyridoxal-5'-phosphate-dependent dehydratases including L-threonine dehydratase. Functionally, also promotes endoribonucleolytic cleavage of some transcripts by promoting recruitment of the ribonuclease P/MRP complex. Acts by bridging YTHDF2 and the ribonuclease P/MRP complex. RIDA/HRSP12 binds to N6-methyladenosine (m6A)-containing mRNAs containing a 5'-GGUUC-3' motif: cooperative binding of RIDA/HRSP12 and YTHDF2 to such transcripts lead to recruitment of the ribonuclease P/MRP complex and subsequent endoribonucleolytic cleavage. The sequence is that of 2-iminobutanoate/2-iminopropanoate deaminase from Mus musculus (Mouse).